The primary structure comprises 402 residues: Putative FBD-associated F-box protein At5g56690 (402 aa).

In terms of domain architecture, F-box spans 1-47; the sequence is MAEISGLPDDLLVKILAFLPTKVAISTSVLSKQWRFLWMWLPKLKYD. In terms of domain architecture, FBD spans 349-401; sequence SWSKNQGSVPKCFLNSLETFRVKWYYSEEQEDRDFLSLIFKHARCLKSTSILH.

This Arabidopsis thaliana (Mouse-ear cress) protein is Putative FBD-associated F-box protein At5g56690.